A 384-amino-acid chain; its full sequence is 4-hydroxy-3-methylbut-2-en-1-yl diphosphate synthase (flavodoxin) (384 aa).

Cys-280, Cys-283, Cys-315, and Glu-322 together coordinate [4Fe-4S] cluster.

Belongs to the IspG family. Requires [4Fe-4S] cluster as cofactor.

The catalysed reaction is (2E)-4-hydroxy-3-methylbut-2-enyl diphosphate + oxidized [flavodoxin] + H2O + 2 H(+) = 2-C-methyl-D-erythritol 2,4-cyclic diphosphate + reduced [flavodoxin]. Its pathway is isoprenoid biosynthesis; isopentenyl diphosphate biosynthesis via DXP pathway; isopentenyl diphosphate from 1-deoxy-D-xylulose 5-phosphate: step 5/6. Converts 2C-methyl-D-erythritol 2,4-cyclodiphosphate (ME-2,4cPP) into 1-hydroxy-2-methyl-2-(E)-butenyl 4-diphosphate. The polypeptide is 4-hydroxy-3-methylbut-2-en-1-yl diphosphate synthase (flavodoxin) (Frankia alni (strain DSM 45986 / CECT 9034 / ACN14a)).